A 142-amino-acid chain; its full sequence is MPSAEVLQETPRVVISVGKKKTAVARAIIKPGIGRVRINGYPLELWPIEMARIKMSEPLILAGELAKKVDIDVNVSGGGYMGQAVAVRIAMARGLVAFFQSQELKELYERYDPYMLKGDPRRTEHKKPGIKHARSKRQKAYR.

Positions 117–142 are disordered; it reads KGDPRRTEHKKPGIKHARSKRQKAYR. Residues 123–142 show a composition bias toward basic residues; it reads TEHKKPGIKHARSKRQKAYR.

This sequence belongs to the universal ribosomal protein uS9 family.

In Pyrobaculum aerophilum (strain ATCC 51768 / DSM 7523 / JCM 9630 / CIP 104966 / NBRC 100827 / IM2), this protein is Small ribosomal subunit protein uS9.